The sequence spans 55 residues: Seripauperin-7 (55 aa).

The first 20 residues, 1–20, serve as a signal peptide directing secretion; the sequence is MVKLTSIAAGVAAIAAGASA.

This sequence belongs to the SRP1/TIP1 family. Seripauperin subfamily.

This Saccharomyces cerevisiae (strain ATCC 204508 / S288c) (Baker's yeast) protein is Seripauperin-7 (PAU7).